The following is a 615-amino-acid chain: 1-deoxy-D-xylulose-5-phosphate synthase (615 aa).

Thiamine diphosphate is bound by residues H72 and 111 to 113; that span reads GHS. A Mg(2+)-binding site is contributed by D142. Residues 143–144, N171, Y278, and E360 contribute to the thiamine diphosphate site; that span reads GA. Residue N171 participates in Mg(2+) binding.

Belongs to the transketolase family. DXPS subfamily. Homodimer. Mg(2+) serves as cofactor. It depends on thiamine diphosphate as a cofactor.

It carries out the reaction D-glyceraldehyde 3-phosphate + pyruvate + H(+) = 1-deoxy-D-xylulose 5-phosphate + CO2. It functions in the pathway metabolic intermediate biosynthesis; 1-deoxy-D-xylulose 5-phosphate biosynthesis; 1-deoxy-D-xylulose 5-phosphate from D-glyceraldehyde 3-phosphate and pyruvate: step 1/1. In terms of biological role, catalyzes the acyloin condensation reaction between C atoms 2 and 3 of pyruvate and glyceraldehyde 3-phosphate to yield 1-deoxy-D-xylulose-5-phosphate (DXP). In Campylobacter jejuni subsp. doylei (strain ATCC BAA-1458 / RM4099 / 269.97), this protein is 1-deoxy-D-xylulose-5-phosphate synthase.